Reading from the N-terminus, the 326-residue chain is Eukaryotic translation initiation factor 3 subunit I (326 aa).

WD repeat units follow at residues 8–47 (GHER…RLGT), 50–89 (GHQG…VIAS), 145–184 (MTES…KVVD), 188–227 (DHSA…CLKT), and 285–326 (GHFG…NIFE).

Belongs to the eIF-3 subunit I family. Component of the eukaryotic translation initiation factor 3 (eIF-3) complex. The eIF-3 complex interacts with pix.

Its subcellular location is the cytoplasm. In terms of biological role, component of the eukaryotic translation initiation factor 3 (eIF-3) complex, which is involved in protein synthesis of a specialized repertoire of mRNAs and, together with other initiation factors, stimulates binding of mRNA and methionyl-tRNAi to the 40S ribosome. The eIF-3 complex specifically targets and initiates translation of a subset of mRNAs involved in cell proliferation. This Drosophila sechellia (Fruit fly) protein is Eukaryotic translation initiation factor 3 subunit I.